We begin with the raw amino-acid sequence, 744 residues long: Catalase-peroxidase (744 aa).

The tryptophyl-tyrosyl-methioninium (Trp-Tyr) (with M-257) cross-link spans 108–231 (WHSAGTYRIS…LAAVQMGLIY (124 aa)). The active-site Proton acceptor is the His109. Positions 231-257 (YVNPEGPNGNPDPIAAARDIRETFRRM) form a cross-link, tryptophyl-tyrosyl-methioninium (Tyr-Met) (with W-108). His272 contributes to the heme b binding site. Residues 353–372 (ANQWKPKDGAGAGTVPDAHD) are disordered.

Belongs to the peroxidase family. Peroxidase/catalase subfamily. In terms of assembly, homodimer or homotetramer. The cofactor is heme b. Post-translationally, formation of the three residue Trp-Tyr-Met cross-link is important for the catalase, but not the peroxidase activity of the enzyme.

The enzyme catalyses H2O2 + AH2 = A + 2 H2O. The catalysed reaction is 2 H2O2 = O2 + 2 H2O. Functionally, bifunctional enzyme with both catalase and broad-spectrum peroxidase activity. The sequence is that of Catalase-peroxidase from Frankia casuarinae (strain DSM 45818 / CECT 9043 / HFP020203 / CcI3).